Consider the following 643-residue polypeptide: 1-deoxy-D-xylulose-5-phosphate synthase (643 aa).

Thiamine diphosphate contacts are provided by residues His78 and 119–121 (AHS). Asp150 serves as a coordination point for Mg(2+). Thiamine diphosphate is bound by residues 151 to 152 (GA), Asn179, Tyr288, and Glu370. Asn179 provides a ligand contact to Mg(2+).

Belongs to the transketolase family. DXPS subfamily. Homodimer. Mg(2+) is required as a cofactor. It depends on thiamine diphosphate as a cofactor.

It carries out the reaction D-glyceraldehyde 3-phosphate + pyruvate + H(+) = 1-deoxy-D-xylulose 5-phosphate + CO2. Its pathway is metabolic intermediate biosynthesis; 1-deoxy-D-xylulose 5-phosphate biosynthesis; 1-deoxy-D-xylulose 5-phosphate from D-glyceraldehyde 3-phosphate and pyruvate: step 1/1. Its function is as follows. Catalyzes the acyloin condensation reaction between C atoms 2 and 3 of pyruvate and glyceraldehyde 3-phosphate to yield 1-deoxy-D-xylulose-5-phosphate (DXP). The polypeptide is 1-deoxy-D-xylulose-5-phosphate synthase (Xanthobacter autotrophicus (strain ATCC BAA-1158 / Py2)).